The primary structure comprises 138 residues: MSTDSIVKASNWRLVEVGRVVLIKKGQSAGKLAAIVEIIDQKKVLIDGPKAGVPRQAINLGQVVLTPLTFALPRGARTATVSKKWAAAAVCEKWAASSWAKKIAQRERRAALTDFERFQVMVLRKQKRYTVKKALAKA.

An N-acetylserine modification is found at serine 2.

Belongs to the eukaryotic ribosomal protein eL14 family. In terms of assembly, component of the large ribosomal subunit (LSU). Mature yeast ribosomes consist of a small (40S) and a large (60S) subunit. The 40S small subunit contains 1 molecule of ribosomal RNA (18S rRNA) and 33 different proteins (encoded by 57 genes). The large 60S subunit contains 3 rRNA molecules (25S, 5.8S and 5S rRNA) and 46 different proteins (encoded by 81 genes). Post-translationally, N-terminally acetylated by acetyltransferase NatA.

The protein resides in the cytoplasm. Its function is as follows. Component of the ribosome, a large ribonucleoprotein complex responsible for the synthesis of proteins in the cell. The small ribosomal subunit (SSU) binds messenger RNAs (mRNAs) and translates the encoded message by selecting cognate aminoacyl-transfer RNA (tRNA) molecules. The large subunit (LSU) contains the ribosomal catalytic site termed the peptidyl transferase center (PTC), which catalyzes the formation of peptide bonds, thereby polymerizing the amino acids delivered by tRNAs into a polypeptide chain. The nascent polypeptides leave the ribosome through a tunnel in the LSU and interact with protein factors that function in enzymatic processing, targeting, and the membrane insertion of nascent chains at the exit of the ribosomal tunnel. This Saccharomyces cerevisiae (strain ATCC 204508 / S288c) (Baker's yeast) protein is Large ribosomal subunit protein eL14A.